We begin with the raw amino-acid sequence, 278 residues long: MFSDKTRNLSRKFDQEHHYTLKKVLKYKQFCNYFVKRKKIPSLFITGTDTNVGKTIVTRAILQVLAQHNFSVVGYKPIACGGDDDLPTEPNQTDYTSEDNSDVLIILDSCPQPVAYRDINSYTFTHSSTPIFAALDAVHHIQEEKLDTDLSNLQQNYPNVVVEGTYGWLTPINKDLSFAEWVHKNNMPAVLVVGIKEGCVNHALLTAQAIQQQGVNLIGWVANRINPCLRHYAELIELLSKKISAPLLGQIPYIAQPHKKDLTSYIENPDPLLAYFQK.

51–56 (NVGKTI) contributes to the ATP binding site. Mg(2+) is bound at residue Thr55. Residue Lys76 is part of the active site. ATP is bound at residue Asp102. Mg(2+)-binding residues include Asp102 and Glu163. ATP is bound by residues 223–224 (NR) and 252–254 (PYI).

The protein belongs to the dethiobiotin synthetase family. Homodimer. The cofactor is Mg(2+).

The protein localises to the cytoplasm. It carries out the reaction (7R,8S)-7,8-diammoniononanoate + CO2 + ATP = (4R,5S)-dethiobiotin + ADP + phosphate + 3 H(+). The protein operates within cofactor biosynthesis; biotin biosynthesis; biotin from 7,8-diaminononanoate: step 1/2. In terms of biological role, catalyzes a mechanistically unusual reaction, the ATP-dependent insertion of CO2 between the N7 and N8 nitrogen atoms of 7,8-diaminopelargonic acid (DAPA, also called 7,8-diammoniononanoate) to form a ureido ring. The protein is ATP-dependent dethiobiotin synthetase BioD 1 of Haemophilus ducreyi (strain 35000HP / ATCC 700724).